Here is a 461-residue protein sequence, read N- to C-terminus: Bifunctional protein GlmU (461 aa).

The pyrophosphorylase stretch occupies residues 1–235 (MTDTRKQRAA…EDDLIGCDSK (235 aa)). UDP-N-acetyl-alpha-D-glucosamine-binding positions include 13 to 16 (LAAG), lysine 27, glutamine 80, 85 to 86 (GT), 108 to 110 (YGD), glycine 146, glutamate 161, and asparagine 176. Residue aspartate 110 participates in Mg(2+) binding. The linker stretch occupies residues 236–256 (ADLAEAEAIFQQKRRRALMEA). The tract at residues 257–461 (GVTMVAPETV…ARTTDQNKKG (205 aa)) is N-acetyltransferase. Positions 322 and 340 each coordinate UDP-N-acetyl-alpha-D-glucosamine. Histidine 352 acts as the Proton acceptor in catalysis. UDP-N-acetyl-alpha-D-glucosamine contacts are provided by tyrosine 355 and asparagine 366. Acetyl-CoA contacts are provided by residues alanine 369, 375 to 376 (NY), serine 394, serine 412, and arginine 429.

In the N-terminal section; belongs to the N-acetylglucosamine-1-phosphate uridyltransferase family. This sequence in the C-terminal section; belongs to the transferase hexapeptide repeat family. As to quaternary structure, homotrimer. Mg(2+) is required as a cofactor.

The protein resides in the cytoplasm. It catalyses the reaction alpha-D-glucosamine 1-phosphate + acetyl-CoA = N-acetyl-alpha-D-glucosamine 1-phosphate + CoA + H(+). The enzyme catalyses N-acetyl-alpha-D-glucosamine 1-phosphate + UTP + H(+) = UDP-N-acetyl-alpha-D-glucosamine + diphosphate. The protein operates within nucleotide-sugar biosynthesis; UDP-N-acetyl-alpha-D-glucosamine biosynthesis; N-acetyl-alpha-D-glucosamine 1-phosphate from alpha-D-glucosamine 6-phosphate (route II): step 2/2. It participates in nucleotide-sugar biosynthesis; UDP-N-acetyl-alpha-D-glucosamine biosynthesis; UDP-N-acetyl-alpha-D-glucosamine from N-acetyl-alpha-D-glucosamine 1-phosphate: step 1/1. Its pathway is bacterial outer membrane biogenesis; LPS lipid A biosynthesis. Functionally, catalyzes the last two sequential reactions in the de novo biosynthetic pathway for UDP-N-acetylglucosamine (UDP-GlcNAc). The C-terminal domain catalyzes the transfer of acetyl group from acetyl coenzyme A to glucosamine-1-phosphate (GlcN-1-P) to produce N-acetylglucosamine-1-phosphate (GlcNAc-1-P), which is converted into UDP-GlcNAc by the transfer of uridine 5-monophosphate (from uridine 5-triphosphate), a reaction catalyzed by the N-terminal domain. The sequence is that of Bifunctional protein GlmU from Hyphomonas neptunium (strain ATCC 15444).